Here is a 138-residue protein sequence, read N- to C-terminus: Large ribosomal subunit protein uL14 (138 aa).

Belongs to the universal ribosomal protein uL14 family. Part of the 50S ribosomal subunit. Forms a cluster with proteins L3 and L24e, part of which may contact the 16S rRNA in 2 intersubunit bridges. Contacts initiation factor aIF-6.

The protein resides in the cytoplasm. Its function is as follows. Binds to 23S rRNA. Forms part of two intersubunit bridges in the 70S ribosome. The protein is Large ribosomal subunit protein uL14 of Saccharolobus solfataricus (strain ATCC 35092 / DSM 1617 / JCM 11322 / P2) (Sulfolobus solfataricus).